The primary structure comprises 242 residues: Carboxy-S-adenosyl-L-methionine synthase (242 aa).

S-adenosyl-L-methionine-binding positions include tyrosine 39, 64–66 (GCS), 89–90 (DN), 117–118 (DI), asparagine 132, and arginine 199.

It belongs to the class I-like SAM-binding methyltransferase superfamily. Cx-SAM synthase family. As to quaternary structure, homodimer.

The catalysed reaction is prephenate + S-adenosyl-L-methionine = carboxy-S-adenosyl-L-methionine + 3-phenylpyruvate + H2O. Functionally, catalyzes the conversion of S-adenosyl-L-methionine (SAM) to carboxy-S-adenosyl-L-methionine (Cx-SAM). The protein is Carboxy-S-adenosyl-L-methionine synthase of Vibrio atlanticus (strain LGP32) (Vibrio splendidus (strain Mel32)).